We begin with the raw amino-acid sequence, 75 residues long: Stewaprin-a (75 aa).

Positions 1-24 are cleaved as a signal peptide; sequence MSSGGLLLLLGLLTLWAELIPVSG. In terms of domain architecture, WAP spans 27 to 72; the sequence is HPKKPGLCPPRPQKPPCVRECKNDWSCPGEQKCCRYGCIFECRDPI. Intrachain disulfides connect Cys34–Cys60, Cys43–Cys64, Cys47–Cys59, and Cys53–Cys68.

It belongs to the venom waprin family. In terms of tissue distribution, expressed by the venom gland.

It localises to the secreted. Functionally, damages membranes of susceptible bacteria. Has no hemolytic activity. Not toxic to mice. Does not inhibit the proteinases elastase and cathepsin G. The sequence is that of Stewaprin-a from Hoplocephalus stephensii (Stephens's banded snake).